The following is a 139-amino-acid chain: MTAPEQTYRNKKQRKQQHKLRRPGYAIAKYVRMSPRKVRLVVDVIRGKSVAEAEDLLRFIPRAASEPVAKVLKSAKSNAINNDEMLEDRLVVAAAYVDAGPTLKRLLPRARGSANIIKKRTSHITIIVAERESLSRKGS.

The disordered stretch occupies residues 1-21 (MTAPEQTYRNKKQRKQQHKLR). The span at 9-21 (RNKKQRKQQHKLR) shows a compositional bias: basic residues.

It belongs to the universal ribosomal protein uL22 family. Part of the 50S ribosomal subunit.

Functionally, this protein binds specifically to 23S rRNA; its binding is stimulated by other ribosomal proteins, e.g. L4, L17, and L20. It is important during the early stages of 50S assembly. It makes multiple contacts with different domains of the 23S rRNA in the assembled 50S subunit and ribosome. The globular domain of the protein is located near the polypeptide exit tunnel on the outside of the subunit, while an extended beta-hairpin is found that lines the wall of the exit tunnel in the center of the 70S ribosome. This is Large ribosomal subunit protein uL22 from Deinococcus geothermalis (strain DSM 11300 / CIP 105573 / AG-3a).